A 358-amino-acid polypeptide reads, in one-letter code: Na(+)/H(+) exchange regulatory cofactor NHE-RF1 (358 aa).

Position 2 is an N-acetylserine (serine 2). A phosphoserine mark is found at serine 2 and serine 46. The region spanning leucine 14–aspartate 94 is the PDZ 1 domain. Residues glutamine 114 to glutamate 134 show a composition bias toward low complexity. Positions glutamine 114 to arginine 151 are disordered. Residues asparagine 135 to arginine 151 are compositionally biased toward basic and acidic residues. Residues leucine 154–glutamate 234 form the PDZ 2 domain. The segment at serine 247–leucine 358 is disordered. The segment covering leucine 272–serine 290 has biased composition (low complexity). Serine 279, serine 289, and serine 290 each carry phosphoserine. Threonine 292 is modified (phosphothreonine). 3 positions are modified to phosphoserine: serine 293, serine 298, and serine 301. Residues threonine 308–leucine 327 show a composition bias toward low complexity. A compositionally biased stretch (basic and acidic residues) spans tryptophan 348–leucine 358.

Homodimer, and heterodimer with NHERF2. Binds the N-termini of EZR, RDX and MSN. Binds the C-termini of PDGFRA, PDGFRB, ADRB2, NOS2 and CFTR. Binds ARHGAP17, EPI64, RACK1, OPRK1, GNAQ, CTNNB1 and PLCB3. Binds PDZK1. Interacts with CLCN3. Binds the C-terminus of PAG1. In resting T-cells, part of a PAG1-NHERF1-MSN complex which is disrupted upon TCR activation. Forms a complex with CFTR and SLC4A7. Forms a complex with SLC4A7 and ATP6V1B1. Interacts with TRPC4 (via the PDZ-binding domain). Directly interacts with HTR4. Interacts (via the PDZ 1 domain) with PODXL (via the C-terminal PDZ-binding motif DTHL); interaction is not detected in glomerular epithelium cells. Interacts (via the PDZ 1 domain) with PODXL (via the C-terminal PDZ-binding motif DTHL); the interaction take place early in the secretory pathway and is necessary for its apical membrane sorting. Interacts with SLC26A3. Interacts with MCC. Interacts with SLC34A1. Interacts (via the PDZ domains) with SLC26A6 isoform 4 and isoform 5. Interacts (via PDZ domains) with ACE2 (via PDZ-binding motif); the interaction may enhance ACE2 membrane residence. Phosphorylated on serine residues. Detected in ileum, duodenum and in kidney, where it is found in the glomerulus, the proximal tubule, the thick ascending limb of Henle's loop and the cortical collecting duct.

The protein localises to the cytoplasm. It is found in the apical cell membrane. It localises to the cell projection. Its subcellular location is the filopodium. The protein resides in the ruffle. The protein localises to the microvillus. It is found in the endomembrane system. Its function is as follows. Scaffold protein that connects plasma membrane proteins with members of the ezrin/moesin/radixin family and thereby helps to link them to the actin cytoskeleton and to regulate their surface expression. Necessary for recycling of internalized ADRB2. Was first known to play a role in the regulation of the activity and subcellular location of SLC9A3. Necessary for cAMP-mediated phosphorylation and inhibition of SLC9A3. Involved in sperm capacitation. May participate in the regulation of the chloride and bicarbonate homeostasis in spermatozoa. May enhance Wnt signaling. May participate in HTR4 targeting to microvilli. Involved in the regulation of phosphate reabsorption in the renal proximal tubules. This chain is Na(+)/H(+) exchange regulatory cofactor NHE-RF1 (NHERF1), found in Oryctolagus cuniculus (Rabbit).